The sequence spans 115 residues: UPF0738 protein SAV1005 (115 aa).

This sequence belongs to the UPF0738 family.

The polypeptide is UPF0738 protein SAV1005 (Staphylococcus aureus (strain Mu50 / ATCC 700699)).